The sequence spans 317 residues: Lipoyl synthase (317 aa).

Residues 1–28 (MDSQPQSKKAARGADKTARNPIPIIPAP) form a disordered region. The [4Fe-4S] cluster site is built by cysteine 64, cysteine 69, cysteine 75, cysteine 90, cysteine 94, cysteine 97, and serine 304. In terms of domain architecture, Radical SAM core spans 76–293 (FGGGTATFMI…QRDGMAMGFR (218 aa)).

This sequence belongs to the radical SAM superfamily. Lipoyl synthase family. The cofactor is [4Fe-4S] cluster.

It localises to the cytoplasm. It catalyses the reaction [[Fe-S] cluster scaffold protein carrying a second [4Fe-4S](2+) cluster] + N(6)-octanoyl-L-lysyl-[protein] + 2 oxidized [2Fe-2S]-[ferredoxin] + 2 S-adenosyl-L-methionine + 4 H(+) = [[Fe-S] cluster scaffold protein] + N(6)-[(R)-dihydrolipoyl]-L-lysyl-[protein] + 4 Fe(3+) + 2 hydrogen sulfide + 2 5'-deoxyadenosine + 2 L-methionine + 2 reduced [2Fe-2S]-[ferredoxin]. Its pathway is protein modification; protein lipoylation via endogenous pathway; protein N(6)-(lipoyl)lysine from octanoyl-[acyl-carrier-protein]: step 2/2. Catalyzes the radical-mediated insertion of two sulfur atoms into the C-6 and C-8 positions of the octanoyl moiety bound to the lipoyl domains of lipoate-dependent enzymes, thereby converting the octanoylated domains into lipoylated derivatives. The chain is Lipoyl synthase from Acidithiobacillus ferrooxidans (strain ATCC 23270 / DSM 14882 / CIP 104768 / NCIMB 8455) (Ferrobacillus ferrooxidans (strain ATCC 23270)).